The following is a 941-amino-acid chain: Protein translocase subunit SecA (941 aa).

ATP is bound by residues Gln-87, 105 to 109 (GEGKT), and Asp-524. The interval 871 to 919 (DEQPPMPAMEAHKLDPNTGEDQVAQAQSGLAPVAPAKRDPANPATWGKV) is disordered. Zn(2+) is bound by residues Cys-925, Cys-927, Cys-936, and His-937.

This sequence belongs to the SecA family. In terms of assembly, monomer and homodimer. Part of the essential Sec protein translocation apparatus which comprises SecA, SecYEG and auxiliary proteins SecDF-YajC and YidC. It depends on Zn(2+) as a cofactor.

The protein resides in the cell inner membrane. It is found in the cytoplasm. The enzyme catalyses ATP + H2O + cellular proteinSide 1 = ADP + phosphate + cellular proteinSide 2.. Its function is as follows. Part of the Sec protein translocase complex. Interacts with the SecYEG preprotein conducting channel. Has a central role in coupling the hydrolysis of ATP to the transfer of proteins into and across the cell membrane, serving both as a receptor for the preprotein-SecB complex and as an ATP-driven molecular motor driving the stepwise translocation of polypeptide chains across the membrane. The sequence is that of Protein translocase subunit SecA from Afipia carboxidovorans (strain ATCC 49405 / DSM 1227 / KCTC 32145 / OM5) (Oligotropha carboxidovorans).